We begin with the raw amino-acid sequence, 309 residues long: MGINLKVSRPKAGSNINMSNTFHTIGLIGKPNHKGTTLTLKRLHHWLSMQGYKVLVEERVAGELGPQVQSVDLLEIGEQCDLAIVVGGDGNMLGAARVLARFSVGVIGVNRGNLGFLTDLPPDSFEEALSKVLEGEFEIEQRFLLEAEVHRHGELKSSNTAVNEAVLHPGKIAYMIEFEVYIDDKFMYSQRADGIIISTPTGSTAYSLSAGGAILTPNLSAVILVPMFPHTLSCRPIVVDAASIIKLVVSPHNSDNLEVSCDGHVHLSVLPGDEIIIKRSQETLRLVHPKGHNYFHVLRTKLGWGSKLF.

Aspartate 89 serves as the catalytic Proton acceptor. Residues 89 to 90, 163 to 164, arginine 191, aspartate 193, and 204 to 209 each bind NAD(+); these read DG, NE, and TAYSLS.

This sequence belongs to the NAD kinase family. The cofactor is a divalent metal cation.

Its subcellular location is the cytoplasm. The catalysed reaction is NAD(+) + ATP = ADP + NADP(+) + H(+). Involved in the regulation of the intracellular balance of NAD and NADP, and is a key enzyme in the biosynthesis of NADP. Catalyzes specifically the phosphorylation on 2'-hydroxyl of the adenosine moiety of NAD to yield NADP. The polypeptide is NAD kinase (Shewanella halifaxensis (strain HAW-EB4)).